The primary structure comprises 311 residues: Transcription initiation factor IIB (311 aa).

A TFIIB-type zinc finger spans residues 11-42; the sequence is KETKCPECGSTKLINDHERGEVVCGACGLVID. The Zn(2+) site is built by cysteine 15, cysteine 18, cysteine 34, and cysteine 37. 2 consecutive repeat copies span residues 128–211 and 222–303.

This sequence belongs to the TFIIB family.

Its function is as follows. Stabilizes TBP binding to an archaeal box-A promoter. Also responsible for recruiting RNA polymerase II to the pre-initiation complex (DNA-TBP-TFIIB). This is Transcription initiation factor IIB from Methanosphaera stadtmanae (strain ATCC 43021 / DSM 3091 / JCM 11832 / MCB-3).